A 249-amino-acid polypeptide reads, in one-letter code: Ciliogenesis and planar polarity effector 2 (249 aa).

The small GTPase-like stretch occupies residues Pro46–Glu249. GTP is bound by residues Gly58 to Thr65 and Thr171 to Asp174.

The protein belongs to the small GTPase superfamily. Rab family. As to quaternary structure, interacts with fuz.

The protein resides in the cytoplasm. The protein localises to the cytoskeleton. It localises to the cilium basal body. Its function is as follows. Potential effector of the planar cell polarity signaling pathway. Plays a role in targeted membrane trafficking most probably at the level of vesicle fusion with membranes. Involved in cilium biogenesis by regulating the transport of cargo proteins to the basal body and to the apical tips of cilia. More generally involved in exocytosis in secretory cells. The chain is Ciliogenesis and planar polarity effector 2 from Xenopus laevis (African clawed frog).